The primary structure comprises 116 residues: Ribonuclease P protein component (116 aa).

The protein belongs to the RnpA family. As to quaternary structure, consists of a catalytic RNA component (M1 or rnpB) and a protein subunit.

It carries out the reaction Endonucleolytic cleavage of RNA, removing 5'-extranucleotides from tRNA precursor.. Its function is as follows. RNaseP catalyzes the removal of the 5'-leader sequence from pre-tRNA to produce the mature 5'-terminus. It can also cleave other RNA substrates such as 4.5S RNA. The protein component plays an auxiliary but essential role in vivo by binding to the 5'-leader sequence and broadening the substrate specificity of the ribozyme. The chain is Ribonuclease P protein component from Exiguobacterium sibiricum (strain DSM 17290 / CCUG 55495 / CIP 109462 / JCM 13490 / 255-15).